The following is a 305-amino-acid chain: Probable GTP 3',8-cyclase (305 aa).

Residues 6 to 233 form the Radical SAM core domain; sequence RHGRPVMSLR…MQDRKKYYID (228 aa). Arg-15 provides a ligand contact to GTP. The [4Fe-4S] cluster site is built by Cys-22 and Cys-26. Tyr-28 lines the S-adenosyl-L-methionine pocket. Cys-29 lines the [4Fe-4S] cluster pocket. A GTP-binding site is contributed by Arg-62. S-adenosyl-L-methionine is bound at residue Gly-66. Residue Thr-92 participates in GTP binding. Ser-116 serves as a coordination point for S-adenosyl-L-methionine. Lys-153 contributes to the GTP binding site. [4Fe-4S] cluster-binding residues include Cys-249 and Cys-252. 254–256 contacts GTP; it reads RLR. A [4Fe-4S] cluster-binding site is contributed by Cys-266.

The protein belongs to the radical SAM superfamily. MoaA family. [4Fe-4S] cluster serves as cofactor.

It catalyses the reaction GTP + AH2 + S-adenosyl-L-methionine = (8S)-3',8-cyclo-7,8-dihydroguanosine 5'-triphosphate + 5'-deoxyadenosine + L-methionine + A + H(+). Its pathway is cofactor biosynthesis; molybdopterin biosynthesis. In terms of biological role, catalyzes the cyclization of GTP to (8S)-3',8-cyclo-7,8-dihydroguanosine 5'-triphosphate. The protein is Probable GTP 3',8-cyclase of Methanothermobacter thermautotrophicus (strain ATCC 29096 / DSM 1053 / JCM 10044 / NBRC 100330 / Delta H) (Methanobacterium thermoautotrophicum).